Reading from the N-terminus, the 465-residue chain is Tubulin gamma chain (465 aa).

144–150 (AGGTGSG) contributes to the GTP binding site.

It belongs to the tubulin family.

It is found in the cytoplasm. The protein localises to the cytoskeleton. Its subcellular location is the microtubule organizing center. The protein resides in the spindle pole body. Tubulin is the major constituent of microtubules. The gamma chain is found at microtubule organizing centers (MTOC) such as the spindle poles or the centrosome, suggesting that it is involved in the minus-end nucleation of microtubule assembly. This Candida glabrata (strain ATCC 2001 / BCRC 20586 / JCM 3761 / NBRC 0622 / NRRL Y-65 / CBS 138) (Yeast) protein is Tubulin gamma chain (TUB4).